The sequence spans 549 residues: MDSQQDRLAKQVLIQKSFESKRLFLTILRFAIPTFFFALFSAAYVFVDQIMVIKFVPHGPLNPDSIFTDQALIEEFKASAFYKGGDIPNHTELTASQLVKTVLNISQPIVVILNAITIFVPLGTGVIFSKTIGKGDEKKIKDAWNTGLVSTTLFALVTQIIVLAIAKEWLQFNLDKVDEQHHVQVADQFQHFFNEKAVAIGSEYVYILIGFNIIPMLSRLFFYLGQSEGRQLFIAIVPPLSNLLNVLFVFLLVRFSTLGVVGSAVAAILVYFITFMAYVVYLISLNKRGLTYLSLRDFSFKRVSFNLFLVISMVGLASFFRNGSLSILNTFYESFLVNLTKTLTDQSDTFYLVLLTGPIAIANLTSAAIFGVLQGVRTVVSYKFGQGQLADIKRINVYTLLVCLVFAALLYLILAVGLGKEILVHLFDTSAATLMLANQFSLIVQAQVFFVAIGATSQQYFQNNNRVLYSWIVSLMQGVIVFVPLLFIFQAITLQTKNIEIFIWLLTANAALAGLINVLIGQVHIHFFMDKYFAQKHKSRIVQFIERYS.

12 helical membrane passes run I27–V47, P108–F128, T146–A166, A197–L217, F233–V253, V265–L285, F308–L328, L352–V372, T399–G419, L434–G454, I472–I492, and I501–G521.

The protein resides in the cell membrane. This is an uncharacterized protein from Mycoplasma pneumoniae (strain ATCC 29342 / M129 / Subtype 1) (Mycoplasmoides pneumoniae).